We begin with the raw amino-acid sequence, 203 residues long: Outer-membrane lipoprotein LolB (203 aa).

The first 17 residues, 1–17 (MNRLFRLLPLASLVLTA), serve as a signal peptide directing secretion. Residue Cys-18 is the site of N-palmitoyl cysteine attachment. Cys-18 carries S-diacylglycerol cysteine lipidation.

The protein belongs to the LolB family. Monomer.

The protein localises to the cell outer membrane. Plays a critical role in the incorporation of lipoproteins in the outer membrane after they are released by the LolA protein. The protein is Outer-membrane lipoprotein LolB of Klebsiella pneumoniae subsp. pneumoniae (strain ATCC 700721 / MGH 78578).